A 231-amino-acid chain; its full sequence is Large ribosomal subunit protein uL5m (231 aa).

It belongs to the universal ribosomal protein uL5 family.

The protein localises to the mitochondrion. In Prototheca wickerhamii, this protein is Large ribosomal subunit protein uL5m (RPL5).